The chain runs to 283 residues: Circadian clock oscillator protein KaiA (283 aa).

Residues 3–133 (QSTALTICGL…VKLCPGCAVP (131 aa)) are psR domain, binds oxidized quinones. The 161-residue stretch at 3–163 (QSTALTICGL…RLSQKLKERL (161 aa)) folds into the KaiA N-terminal domain. The tract at residues 164-172 (GYLGVYYKR) is flexible linker. Positions 173 to 281 (DTAFFFRRMS…CEMYRRSIPR (109 aa)) constitute a KaiA C-terminal domain.

Homodimer. The KaiABC complex composition changes during the circadian cycle to control KaiC phosphorylation. Complexes KaiC(6), KaiA(2-4):KaiC(6), KaiB(6):KaiC(6) and KaiC(6):KaiB(6):KaiA(12) are among the most important forms, many form cooperatively. KaiA and CikA bind to the same region of the KaiB(fs) form and therefore compete.

Functionally, key component of the KaiABC oscillator complex, which constitutes the main circadian regulator in cyanobacteria. Complex composition changes during the circadian cycle to control KaiC phosphorylation. KaiA stimulates KaiC autophosphorylation, while KaiB sequesters KaiA, leading to KaiC autodephosphorylation. KaiA binding to the KaiC CII domain during the subjective day yields KaiA(2-4):KaiC(6) complexes which stimulate KaiC autophosphorylation. Phospho-Ser-431 KaiC accumulation triggers binding of KaiB during the subjective night to form the KaiB(6):KaiC(6) complex, leading to changes in the output regulators CikA and SasA. KaiB(6):KaiC(6) formation exposes a site for KaiA binding on KaiB that sequesters KaiA from KaiC's CII domain, making the KaiC(6):KaiB(6):KaiA(12) complex resulting in KaiC autodephosphorylation. Complete dephosphorylation of KaiC leads to dissociation of KaiA(2):KaiB(1), completing 1 cycle of the Kai oscillator. Binds oxidized quinones via the N-terminal PsR domain, allowing it to sense redox changes and possibly mediate clock input. The polypeptide is Circadian clock oscillator protein KaiA (Thermostichus vulcanus (Synechococcus vulcanus)).